The primary structure comprises 254 residues: UPF0246 protein CPF_2407 (254 aa).

Belongs to the UPF0246 family.

The polypeptide is UPF0246 protein CPF_2407 (Clostridium perfringens (strain ATCC 13124 / DSM 756 / JCM 1290 / NCIMB 6125 / NCTC 8237 / Type A)).